Reading from the N-terminus, the 195-residue chain is Probable DNA-directed RNA polymerase subunit delta (195 aa).

The 70-residue stretch at 14–83 (LSMIEVARAI…GDNKWGLRSW (70 aa)) folds into the HTH HARE-type domain. 2 stretches are compositionally biased toward acidic residues: residues 119-138 (GDED…DSYE) and 145-195 (YDDE…GEEE). A disordered region spans residues 119–195 (GDEDAIDYSD…SDDDAEGEEE (77 aa)).

This sequence belongs to the RpoE family. In terms of assembly, RNAP is composed of a core of 2 alpha, a beta and a beta' subunits. The core is associated with a delta subunit and one of several sigma factors.

In terms of biological role, participates in both the initiation and recycling phases of transcription. In the presence of the delta subunit, RNAP displays an increased specificity of transcription, a decreased affinity for nucleic acids, and an increased efficiency of RNA synthesis because of enhanced recycling. This chain is Probable DNA-directed RNA polymerase subunit delta, found in Streptococcus gordonii (strain Challis / ATCC 35105 / BCRC 15272 / CH1 / DL1 / V288).